The chain runs to 510 residues: Arginine biosynthesis bifunctional protein ArgJ, chloroplastic (510 aa).

Substrate contacts are provided by Thr-223, Lys-249, Glu-359, Asn-505, and Thr-510.

The protein belongs to the ArgJ family. As to quaternary structure, heterodimer of an alpha and a beta chain.

The protein resides in the plastid. It localises to the chloroplast. It carries out the reaction N(2)-acetyl-L-ornithine + L-glutamate = N-acetyl-L-glutamate + L-ornithine. The catalysed reaction is L-glutamate + acetyl-CoA = N-acetyl-L-glutamate + CoA + H(+). Its pathway is amino-acid biosynthesis; L-arginine biosynthesis; L-ornithine and N-acetyl-L-glutamate from L-glutamate and N(2)-acetyl-L-ornithine (cyclic): step 1/1. The protein operates within amino-acid biosynthesis; L-arginine biosynthesis; N(2)-acetyl-L-ornithine from L-glutamate: step 1/4. Its function is as follows. Catalyzes two activities which are involved in the cyclic version of arginine biosynthesis: the synthesis of acetylglutamate from glutamate and acetyl-CoA, and of ornithine by transacetylation between acetylornithine and glutamate. This is Arginine biosynthesis bifunctional protein ArgJ, chloroplastic from Vitis vinifera (Grape).